A 785-amino-acid chain; its full sequence is Protein translocase subunit SecA 3 (785 aa).

ATP contacts are provided by residues Gln98, 116–120, and Asp505; that span reads GEGKT.

The protein belongs to the SecA family. In terms of assembly, monomer and homodimer. Part of the essential Sec protein translocation apparatus which comprises SecA, SecYEG and auxiliary proteins SecDF. Other proteins may also be involved.

Its subcellular location is the cell membrane. The protein resides in the cytoplasm. It carries out the reaction ATP + H2O + cellular proteinSide 1 = ADP + phosphate + cellular proteinSide 2.. In terms of biological role, part of the Sec protein translocase complex. Interacts with the SecYEG preprotein conducting channel. Has a central role in coupling the hydrolysis of ATP to the transfer of proteins into and across the cell membrane, serving as an ATP-driven molecular motor driving the stepwise translocation of polypeptide chains across the membrane. This chain is Protein translocase subunit SecA 3, found in Mycolicibacterium vanbaalenii (strain DSM 7251 / JCM 13017 / BCRC 16820 / KCTC 9966 / NRRL B-24157 / PYR-1) (Mycobacterium vanbaalenii).